The following is a 162-amino-acid chain: Protein A49 (162 aa).

The protein belongs to the poxviridae A49 protein family.

The chain is Protein A49 from Homo sapiens (Human).